The primary structure comprises 931 residues: DNA mismatch repair protein MutS (931 aa).

A compositionally biased stretch (low complexity) spans 1–10 (MMDDTAMPAR). The tract at residues 1-34 (MMDDTAMPARAEADAAEDELAAPAGIDRTAKADK) is disordered. 674–681 (GPNMAGKS) serves as a coordination point for ATP.

This sequence belongs to the DNA mismatch repair MutS family.

Its function is as follows. This protein is involved in the repair of mismatches in DNA. It is possible that it carries out the mismatch recognition step. This protein has a weak ATPase activity. The chain is DNA mismatch repair protein MutS from Azorhizobium caulinodans (strain ATCC 43989 / DSM 5975 / JCM 20966 / LMG 6465 / NBRC 14845 / NCIMB 13405 / ORS 571).